Consider the following 873-residue polypeptide: Protein SEY1 (873 aa).

The interval 1–21 (MVANGHFAGSADGQDSSSYEH) is disordered. The Cytoplasmic segment spans residues 1–749 (MVANGHFAGS…KRSAIGGITQ (749 aa)). Residues 49–307 (GFNYHLISVF…IPADGFAVYA (259 aa)) form the GB1/RHD3-type G domain. Residue 59-66 (GSQSTGKS) coordinates GTP. A coiled-coil region spans residues 482–506 (SNYQQELSLYQKDLERTSGQLRRDE). The segment at 676–703 (LDKWIGHTPSSATPADEEDLTPIGGVDD) is disordered. Residues 690-703 (ADEEDLTPIGGVDD) show a composition bias toward acidic residues. Residues 750–770 (VPLYFYGLLFALGWNEILAVL) traverse the membrane as a helical segment. The Lumenal segment spans residues 771-773 (RNP). Residues 774–794 (VYFLLLFVCAIGAYITYQLNL) traverse the membrane as a helical segment. The Cytoplasmic portion of the chain corresponds to 795–873 (WGPIIKMTEA…EDVDDDDDDF (79 aa)). Positions 828 to 873 (RQAMAMSGARNATEEHEMSRLSRKPAERGGRKNRADEDVDDDDDDF) are disordered. Over residues 839–863 (ATEEHEMSRLSRKPAERGGRKNRAD) the composition is skewed to basic and acidic residues. Over residues 864–873 (EDVDDDDDDF) the composition is skewed to acidic residues.

It belongs to the TRAFAC class dynamin-like GTPase superfamily. GB1/RHD3 GTPase family. RHD3 subfamily.

Its subcellular location is the endoplasmic reticulum membrane. Functionally, cooperates with the reticulon proteins and tubule-shaping DP1 family proteins to generate and maintain the structure of the tubular endoplasmic reticulum network. Has GTPase activity, which is required for its function in ER organization. In Ajellomyces capsulatus (strain G186AR / H82 / ATCC MYA-2454 / RMSCC 2432) (Darling's disease fungus), this protein is Protein SEY1.